Reading from the N-terminus, the 78-residue chain is Leukemia-associated protein 1 (78 aa).

In terms of biological role, may act as a tumor suppressor. The chain is Leukemia-associated protein 1 (DLEU1) from Homo sapiens (Human).